A 183-amino-acid polypeptide reads, in one-letter code: Protein Syd (183 aa).

This sequence belongs to the Syd family.

The protein localises to the cell inner membrane. Interacts with the SecY protein in vivo. May bind preferentially to an uncomplexed state of SecY, thus functioning either as a chelating agent for excess SecY in the cell or as a regulatory factor that negatively controls the translocase function. This Aliivibrio fischeri (strain MJ11) (Vibrio fischeri) protein is Protein Syd.